Reading from the N-terminus, the 239-residue chain is Probable methylthioribulose-1-phosphate dehydratase (239 aa).

A substrate-binding site is contributed by cysteine 100. Positions 118 and 120 each coordinate Zn(2+). The Proton donor/acceptor role is filled by glutamate 141. Histidine 197 is a Zn(2+) binding site.

Belongs to the aldolase class II family. MtnB subfamily. Zn(2+) is required as a cofactor.

It localises to the cytoplasm. It catalyses the reaction 5-(methylsulfanyl)-D-ribulose 1-phosphate = 5-methylsulfanyl-2,3-dioxopentyl phosphate + H2O. It participates in amino-acid biosynthesis; L-methionine biosynthesis via salvage pathway; L-methionine from S-methyl-5-thio-alpha-D-ribose 1-phosphate: step 2/6. Its function is as follows. Catalyzes the dehydration of methylthioribulose-1-phosphate (MTRu-1-P) into 2,3-diketo-5-methylthiopentyl-1-phosphate (DK-MTP-1-P). This chain is Probable methylthioribulose-1-phosphate dehydratase, found in Leishmania major.